We begin with the raw amino-acid sequence, 319 residues long: Acetyl-coenzyme A carboxylase carboxyl transferase subunit alpha (319 aa).

In terms of domain architecture, CoA carboxyltransferase C-terminal spans 39-293 (KLEKKVDRMR…HEAIARQLKE (255 aa)).

This sequence belongs to the AccA family. Acetyl-CoA carboxylase is a heterohexamer composed of biotin carboxyl carrier protein (AccB), biotin carboxylase (AccC) and two subunits each of ACCase subunit alpha (AccA) and ACCase subunit beta (AccD).

Its subcellular location is the cytoplasm. The enzyme catalyses N(6)-carboxybiotinyl-L-lysyl-[protein] + acetyl-CoA = N(6)-biotinyl-L-lysyl-[protein] + malonyl-CoA. Its pathway is lipid metabolism; malonyl-CoA biosynthesis; malonyl-CoA from acetyl-CoA: step 1/1. Functionally, component of the acetyl coenzyme A carboxylase (ACC) complex. First, biotin carboxylase catalyzes the carboxylation of biotin on its carrier protein (BCCP) and then the CO(2) group is transferred by the carboxyltransferase to acetyl-CoA to form malonyl-CoA. This Geobacter sulfurreducens (strain ATCC 51573 / DSM 12127 / PCA) protein is Acetyl-coenzyme A carboxylase carboxyl transferase subunit alpha.